We begin with the raw amino-acid sequence, 375 residues long: uncharacterized protein (375 aa).

The N-terminal stretch at 1 to 20 (MKNKLFIILIIFIILKIVIC) is a signal peptide. Residues 21-335 (QNTTPSKLIP…EKQVERKITP (315 aa)) are Extracellular-facing. The span at 30 to 42 (PQQQQKQKQQQTQ) shows a compositional bias: low complexity. Disordered stretches follow at residues 30–74 (PQQQ…QPQQ) and 113–253 (SQNV…PHNH). Positions 43–53 (PHHHHHHHQQH) are enriched in basic residues. Over residues 54–74 (QQHQQQHQPNQQIKQQQQPQQ) the composition is skewed to low complexity. Residues 120-151 (PPHHTQQRVPHHHGPNGAPHHHGPNGAPHHHG) are compositionally biased toward basic residues. Residues 168–180 (GHNTQGHVQTNHV) show a composition bias toward polar residues. Over residues 181 to 220 (NNINKNNINNNNNNNNNNNNNNNNNNNNNINDNKNIRNNI) the composition is skewed to low complexity. The helical transmembrane segment at 336–356 (IMVLYILLASTMVIQLFIMVF) threads the bilayer. Residues 357–375 (KQVKHIREINAKTTMESLL) are Cytoplasmic-facing.

Its subcellular location is the membrane. This is an uncharacterized protein from Dictyostelium discoideum (Social amoeba).